The chain runs to 956 residues: Plasma membrane ATPase 1 (956 aa).

At 1–65 (MAEKPEVLDA…EKKESKFLKF (65 aa)) the chain is on the cytoplasmic side. A helical transmembrane segment spans residues 66-85 (LGFMWNPLSWVMEAAAIMAI). Topologically, residues 86–97 (ALANGGGKPPDW) are extracellular. The chain crosses the membrane as a helical span at residues 98–118 (QDFVGIITLLIINSTISFIEE). The Cytoplasmic portion of the chain corresponds to 119 to 247 (NNAGNAAAAL…GHFQKVLTAI (129 aa)). A helical transmembrane segment spans residues 248–268 (GNFCICSIAVGMIIEIIVMYP). The Extracellular portion of the chain corresponds to 269–277 (IQHRKYRPG). A helical transmembrane segment spans residues 278–295 (IDNLLVLLIGGIPIAMPT). Residues 296 to 646 (VLSVTMAIGS…LTSRAIFQRM (351 aa)) lie on the Cytoplasmic side of the membrane. Aspartate 333 acts as the 4-aspartylphosphate intermediate in catalysis. 2 residues coordinate Mg(2+): aspartate 592 and aspartate 596. The chain crosses the membrane as a helical span at residues 647-666 (KNYTIYAVSITIRIVLGFML). The Extracellular segment spans residues 667–674 (LALIWKFD). A helical transmembrane segment spans residues 675-697 (FPPFMVLIIAILNDGTIMTISKD). Topologically, residues 698–713 (RVKPSPLPDSWKLAEI) are cytoplasmic. A helical membrane pass occupies residues 714-734 (FTTGVVLGGYLAMMTVIFFWA). Topologically, residues 735–759 (AYKTNFFPRIFGVSTLEKTATDDFR) are extracellular. A helical membrane pass occupies residues 760-780 (KLASAIYLQVSTISQALIFVT). The Cytoplasmic portion of the chain corresponds to 781 to 792 (RSRSWSFVERPG). A helical transmembrane segment spans residues 793 to 813 (LLLVFAFFVAQLVATLIAVYA). Topologically, residues 814–821 (NWSFAAIE) are extracellular. A helical transmembrane segment spans residues 822 to 842 (GIGWGWAGVIWLYNIVTYIPL). Residues 843–956 (DLIKFLIRYA…IETIQQSYTV (114 aa)) are Cytoplasmic-facing.

The protein belongs to the cation transport ATPase (P-type) (TC 3.A.3) family. Type IIIA subfamily. In terms of assembly, possibly exists as a homodimer or a homotrimer.

It is found in the cell membrane. It carries out the reaction ATP + H2O + H(+)(in) = ADP + phosphate + 2 H(+)(out). Its function is as follows. The plasma membrane ATPase of plants and fungi is a hydrogen ion pump. The proton gradient it generates drives the active transport of nutrients by H(+)-symport. The resulting external acidification and/or internal alkinization may mediate growth responses. The polypeptide is Plasma membrane ATPase 1 (LHA1) (Solanum lycopersicum (Tomato)).